The primary structure comprises 461 residues: Methylenetetrahydrofolate--tRNA-(uracil-5-)-methyltransferase TrmFO (461 aa).

Gly16–Gly21 provides a ligand contact to FAD.

Belongs to the MnmG family. TrmFO subfamily. FAD serves as cofactor.

The protein resides in the cytoplasm. It catalyses the reaction uridine(54) in tRNA + (6R)-5,10-methylene-5,6,7,8-tetrahydrofolate + NADH + H(+) = 5-methyluridine(54) in tRNA + (6S)-5,6,7,8-tetrahydrofolate + NAD(+). The catalysed reaction is uridine(54) in tRNA + (6R)-5,10-methylene-5,6,7,8-tetrahydrofolate + NADPH + H(+) = 5-methyluridine(54) in tRNA + (6S)-5,6,7,8-tetrahydrofolate + NADP(+). In terms of biological role, catalyzes the folate-dependent formation of 5-methyl-uridine at position 54 (M-5-U54) in all tRNAs. This Parasynechococcus marenigrum (strain WH8102) protein is Methylenetetrahydrofolate--tRNA-(uracil-5-)-methyltransferase TrmFO.